A 607-amino-acid chain; its full sequence is UvrABC system protein C (607 aa).

One can recognise a GIY-YIG domain in the interval D29–I106. In terms of domain architecture, UVR spans G211–V246.

It belongs to the UvrC family. Interacts with UvrB in an incision complex.

It is found in the cytoplasm. The UvrABC repair system catalyzes the recognition and processing of DNA lesions. UvrC both incises the 5' and 3' sides of the lesion. The N-terminal half is responsible for the 3' incision and the C-terminal half is responsible for the 5' incision. The chain is UvrABC system protein C from Desulfitobacterium hafniense (strain Y51).